Here is a 75-residue protein sequence, read N- to C-terminus: Translational regulator CsrA (75 aa).

The protein belongs to the CsrA/RsmA family. As to quaternary structure, homodimer; the beta-strands of each monomer intercalate to form a hydrophobic core, while the alpha-helices form wings that extend away from the core.

It is found in the cytoplasm. Functionally, a translational regulator that binds mRNA to regulate translation initiation and/or mRNA stability. Usually binds in the 5'-UTR at or near the Shine-Dalgarno sequence preventing ribosome-binding, thus repressing translation. Its main target seems to be the major flagellin gene, while its function is anatagonized by FliW. This Acetivibrio thermocellus (strain ATCC 27405 / DSM 1237 / JCM 9322 / NBRC 103400 / NCIMB 10682 / NRRL B-4536 / VPI 7372) (Clostridium thermocellum) protein is Translational regulator CsrA.